Reading from the N-terminus, the 254-residue chain is Pyruvate aldolase (254 aa).

His-48 functions as the Proton acceptor in the catalytic mechanism. 2 residues coordinate a divalent metal cation: Glu-151 and Asp-177.

It belongs to the HpcH/HpaI aldolase family. A divalent metal cation serves as cofactor.

The catalysed reaction is D-glyceraldehyde + pyruvate = 2-dehydro-3-deoxy-L-galactonate. In terms of biological role, aldolase which can catalyze in vitro the aldolisation reaction between pyruvate (PA) and D-glyceraldehyde (D-GA) to form 2-dehydro-3-deoxy-L-galactonate. The sequence is that of Pyruvate aldolase from Rhizobium etli (strain ATCC 51251 / DSM 11541 / JCM 21823 / NBRC 15573 / CFN 42).